Reading from the N-terminus, the 147-residue chain is D-aminoacyl-tRNA deacylase (147 aa).

The Gly-cisPro motif, important for rejection of L-amino acids signature appears at 136 to 137; it reads GP.

It belongs to the DTD family. In terms of assembly, homodimer.

The protein localises to the cytoplasm. The catalysed reaction is glycyl-tRNA(Ala) + H2O = tRNA(Ala) + glycine + H(+). It carries out the reaction a D-aminoacyl-tRNA + H2O = a tRNA + a D-alpha-amino acid + H(+). In terms of biological role, an aminoacyl-tRNA editing enzyme that deacylates mischarged D-aminoacyl-tRNAs. Also deacylates mischarged glycyl-tRNA(Ala), protecting cells against glycine mischarging by AlaRS. Acts via tRNA-based rather than protein-based catalysis; rejects L-amino acids rather than detecting D-amino acids in the active site. By recycling D-aminoacyl-tRNA to D-amino acids and free tRNA molecules, this enzyme counteracts the toxicity associated with the formation of D-aminoacyl-tRNA entities in vivo and helps enforce protein L-homochirality. The polypeptide is D-aminoacyl-tRNA deacylase (Streptococcus pyogenes serotype M6 (strain ATCC BAA-946 / MGAS10394)).